Consider the following 221-residue polypeptide: Uracil-DNA glycosylase (221 aa).

Catalysis depends on Asp-63, which acts as the Proton acceptor.

Belongs to the uracil-DNA glycosylase (UDG) superfamily. UNG family.

Its subcellular location is the cytoplasm. It carries out the reaction Hydrolyzes single-stranded DNA or mismatched double-stranded DNA and polynucleotides, releasing free uracil.. In terms of biological role, excises uracil residues from the DNA which can arise as a result of misincorporation of dUMP residues by DNA polymerase or due to deamination of cytosine. This chain is Uracil-DNA glycosylase, found in Blochmanniella floridana.